The following is a 500-amino-acid chain: MSLNRVLHIFLIAYLACTALTHDFDDTIAVVGAGYSGLSAAFTLVKKGYTNVEIYESQGEVGGYVYSVDYNNVAHDLATYALTPAYWKFQEAMKSIGVGFCELDVAIVQTNSTPVSVPFEKWMAAYWAAKVPNPLNLVRKVSTQVSTYVEVWKKLFNMDFIDTSTKRTNRLFPLKTNDVDVLAQFSMPMKDFVALHKLDLLEPLFIQATDSQAYGPYDTTPALYYMVWFPPNLFNGEENTVPCGTYNSMQSMAEHMAEWLKSKGVTFHMNTKVTKISRATDGSSPSLLEEGVATPKLFDTIISTNKLPSANRAEVVTPLLPKEREAADTYEELQMFSALLETNRSDAIPTTGFLMVDADAIIAHDPNTGFWGCLNAERRGGYSDENAILSSDTVTRVSAIYYYTERANNERIDFSLDEKIQQVKTNLATWDSATWTNLTSRTFGGYFQRWRTPDVMGQKPWNLADIQGEGDVYYVNSAACGFESVGHVFDCADNLIKDFF.

An N-terminal signal peptide occupies residues 1-21 (MSLNRVLHIFLIAYLACTALT).

As to quaternary structure, homodimer. An oxidized flavin serves as cofactor. Glycosylated.

It catalyses the reaction (5Z,8Z,11Z,14Z,17Z)-eicosapentaenoate = (5Z,7E,9E,14Z,17Z)-icosapentaenoate. Functionally, involved in the biosynthesis of conjugated triene-containing fatty acids. Catalyzes the isomerization of a wide range of substrates containing three or more methylene interrupted olefins into a Z,E,E conjugated triene functionality. May be involved in a stress tolerance mechanism as response to intertidal habitats with direct sunlight, desiccation and high temperature. In vitro substrates include arachidonic acid ((5Z,8Z,11Z,14Z)-eicosatetraenoic acid), EPA ((5Z,8Z, 11Z,14Z,17Z)-eicosapentaenoic acid), DHA ((4Z,7Z,10Z,13Z,16Z,19Z)-docosahexenoic acid), adrenic acid ((7Z,10Z,13Z,16Z)-docosatetraenoic acid), anandamide (arachidonyl-N-ethanolamide) and eicosatrienoic acid ((5Z,8Z,11Z)-eicosatrienoic acid). Gamma-linolenic acid (18:3 6Z,9Z,12Z) and dihomo-gamma-linolenic acid (20:3 8Z,11Z,14Z) are transformed into mixtures of conjugated diene and triene fatty acids, linoleic acid is only transformed to a conjugated diene. In Ptilota filicina (Red alga), this protein is Polyenoic fatty acid isomerase.